The primary structure comprises 94 residues: Large ribosomal subunit protein eL42 (94 aa).

4 residues coordinate Zn(2+): Cys11, Cys14, Cys71, and Cys74. Residues 11–74 form a C4-type zinc finger; it reads CPFCKKHTIH…LDLRFRCTEC (64 aa).

The protein belongs to the eukaryotic ribosomal protein eL42 family. In terms of assembly, part of the 50S ribosomal subunit. It depends on Zn(2+) as a cofactor.

Binds to the 23S rRNA. The polypeptide is Large ribosomal subunit protein eL42 (Pyrococcus furiosus (strain ATCC 43587 / DSM 3638 / JCM 8422 / Vc1)).